A 998-amino-acid polypeptide reads, in one-letter code: MSRPASSNPPGRSPLRRGALTPTLIVVAVAVVGFIFFANVWTDVLWYQQLGFFEVYIRENLARIITFLIGFAMMFAAVFFAIRIAYRSRPVYAPDAEARDNLNRYQAQLEPVRRVVMIGLPILFGLFAGSAAASQWQKALLFFNQEPFGQADPLFNMDISFYLMSLPFLGFITGFLISIAVVAGIAGILTHYLYGSIRLMERGIFTSRAAQIHIAVTGALFLILLGVNFWLDRYTTVQSNSGRWAGALYTDVNAVVPTKAILAVAAGLVAILFIIAAIIGRWRLPVIGTAMLVITAILAGGVYPWVIQQFQVRPSENTLEKEFIDRNIKMTRAAYGLDKIDVSAYNATTTATTGALAADAQTTANIRLLDPNLISSAFAQLEQYRPYYQFPQTLNVDRYMVDGKVQDTVIAVRELNPDGLSANQQTWVNRHIVYTHGYGVVAAKGNKFTADGKPEFLQSGIPSNGVLGNDTSYEPRIYFGENSPEYSIVGAPDGAPNREQDRPAGREGGGETQYTFSGNGGPNVGNWLNRILYSIKFQSSDLLLSDGVNAESQILYERNPRERVEKLAPYLTVDGNAYPAVVDGRVKWIVDGYTTSQYFPYSQPQQLQNATVDSQTSAGRTVALPNSSVNYIRNSVKATVDAYDGSVNLYAWDDQDPILKAWQKVFPTVIKPYSEMSGDLMSHVRYPEDLFKVQRELLGRYHVTDPDSFYQNNDAWSVPNDPTVSEAVKQPPFYMSLQMPDQEKPAFQLTSSFIPQTVNGSARNILYGFLAADSDAGNVKGVKGESYGKLRLLELPTDTQVPGPGQAQNKFNSDPTVSQALNLLRQGASDVLNGNLLTLPVGGGLLYVQPVYLKSTGETSYPTLQRVLVAFGDKIGFAPTLDEALDQLFGGDSGATAGDSDNNGQTPTSPPGTTPPPAGPTDAKADLKAALDEANKAIQDGQAALAKGDFAGYGAQQTKLSEALKKAIDAQARLDATPAPTATPGATPSATPSPSPSS.

The next 7 helical transmembrane spans lie at 18–38 (GALT…IFFA), 64–84 (IITF…AIRI), 115–135 (VVMI…AASQ), 168–188 (FLGF…IAGI), 211–231 (QIHI…NFWL), 260–280 (AILA…AIIG), and 287–307 (IGTA…PWVI). Disordered stretches follow at residues 490–518 (GAPD…TFSG), 888–923 (LFGG…PTDA), and 971–998 (QARL…SPSS). Positions 496–509 (PNREQDRPAGREGG) are enriched in basic and acidic residues. Pro residues predominate over residues 908–919 (TSPPGTTPPPAG). Residues 976–990 (ATPAPTATPGATPSA) are compositionally biased toward low complexity.

It belongs to the UPF0182 family.

Its subcellular location is the cell membrane. The sequence is that of UPF0182 protein AAur_2732 from Paenarthrobacter aurescens (strain TC1).